We begin with the raw amino-acid sequence, 692 residues long: Putative ESX-1 scaffolding and assembly protein SaeA (692 aa).

Over residues 1-21 (MGERGELVSDLHPSDDHDADP) the composition is skewed to basic and acidic residues. 2 disordered regions span residues 1–23 (MGER…DPRL) and 87–134 (PAAP…TTGF). A compositionally biased stretch (pro residues) spans 89 to 107 (APEPDPPPVPEPQPEPEPG).

Its subcellular location is the cytoplasm. In terms of biological role, may be involved in assembly of the ESX-1 / type VII specialized secretion system (T7SS), which exports several proteins including EsxA and EsxB. Involved in DNA conjugation in recipient (MKD8) but not donor (mc(2)155) strain. The sequence is that of Putative ESX-1 scaffolding and assembly protein SaeA from Mycolicibacterium smegmatis (strain ATCC 700084 / mc(2)155) (Mycobacterium smegmatis).